The following is a 270-amino-acid chain: tRNA pseudouridine synthase A (270 aa).

The active-site Nucleophile is the aspartate 60. Substrate is bound at residue tyrosine 118.

This sequence belongs to the tRNA pseudouridine synthase TruA family. Homodimer.

The enzyme catalyses uridine(38/39/40) in tRNA = pseudouridine(38/39/40) in tRNA. In terms of biological role, formation of pseudouridine at positions 38, 39 and 40 in the anticodon stem and loop of transfer RNAs. The protein is tRNA pseudouridine synthase A of Cronobacter sakazakii (strain ATCC BAA-894) (Enterobacter sakazakii).